The chain runs to 158 residues: Naphthalene 1,2-dioxygenase system, small oxygenase component (158 aa).

This sequence belongs to the bacterial ring-hydroxylating dioxygenase beta subunit family. As to quaternary structure, the naphthalene dioxygenase (NDO) multicomponent enzyme system is composed of an electron transfer component and a dioxygenase component (iron sulfur protein (ISP)). The electron transfer component is composed of a ferredoxin reductase (NdoR) and a ferredoxin (NdoA), and the dioxygenase component is formed of a heterohexamer (trimer of heterodimers) of three large alpha subunits (NdoB) and three small beta subunits (NdoC).

Its pathway is aromatic compound metabolism; naphthalene degradation. In terms of biological role, component of the naphthalene dioxygenase (NDO) multicomponent enzyme system which catalyzes the incorporation of both atoms of molecular oxygen into naphthalene to form cis-(1R,2S)-dihydroxy-1,2-dihydronaphthalene. The beta subunit seems to have a structural role in the holoenzyme. The sequence is that of Naphthalene 1,2-dioxygenase system, small oxygenase component from Pseudomonas fluorescens.